A 426-amino-acid chain; its full sequence is Aspartate aminotransferase, mitochondrial (426 aa).

Residues 1-29 (MIRSARLISNIKFGQKNIRQFSTNTNWWA) constitute a mitochondrion transit peptide. The substrate site is built by Gly60, Trp156, and Asn209. N6-(pyridoxal phosphate)lysine is present on Lys273. Arg401 provides a ligand contact to substrate.

This sequence belongs to the class-I pyridoxal-phosphate-dependent aminotransferase family. In terms of assembly, homodimer. Requires pyridoxal 5'-phosphate as cofactor.

The protein localises to the mitochondrion matrix. It is found in the cell membrane. It carries out the reaction L-aspartate + 2-oxoglutarate = oxaloacetate + L-glutamate. The catalysed reaction is L-kynurenine + 2-oxoglutarate = kynurenate + L-glutamate + H2O. Its function is as follows. Plays a key role in amino acid metabolism. Important for metabolite exchange between mitochondria and cytosol. This chain is Aspartate aminotransferase, mitochondrial (aatA), found in Dictyostelium discoideum (Social amoeba).